The sequence spans 818 residues: Cation/H(+) antiporter 6A (818 aa).

13 helical membrane-spanning segments follow: residues 51-71 (NFWEYPLPNLEILIFSTFFIW), 88-110 (FTYMMIAGIILGQTCHFSNKSWI), 123-143 (VAETLGAFGFVLYWFLKGVTM), 156-176 (SVIGFITVIIPLICGSLTFRY), 192-212 (LIIFLQSISAFTSIDTLLKDL), 222-242 (IALSGAMVTDMLAFGVTFFNA), 248-268 (LYGFMQTVGFCLFVVVMICVV), 288-308 (FYLYSIFGIAFACFTFFNKVI), 310-330 (LFGPAGSFVFGLTVPNGYPLG), 340-360 (FNLGSILPLFGSLTMMQVDLL), 376-396 (IYEVISFILLVNTTKFVVTTI), 409-429 (FALALVLSNKGIFELAYYTYA), and 438-458 (EVFTILAAYTLLNSIFIPMLL).

This sequence belongs to the monovalent cation:proton antiporter 2 (CPA2) transporter (TC 2.A.37) family. CHX (TC 2.A.37.4) subfamily. Preferentially expressed in pollen.

The protein localises to the membrane. May operate as a cation/H(+) antiporter. This Arabidopsis thaliana (Mouse-ear cress) protein is Cation/H(+) antiporter 6A (CHX6a).